Here is a 123-residue protein sequence, read N- to C-terminus: Cliotide T12 (123 aa).

Residues Met1–Ala28 form the signal peptide. The cyclopeptide (Gly-Asp) cross-link spans Gly29–Asp58. Intrachain disulfides connect Cys32–Cys48, Cys36–Cys50, and Cys41–Cys55. The propeptide at His59–Asn123 is removed in mature form.

Contains 3 disulfide bonds. Post-translationally, this is a cyclic peptide.

Probably participates in a plant defense mechanism. This is Cliotide T12 from Clitoria ternatea (Butterfly pea).